The primary structure comprises 320 residues: Acetyl-coenzyme A carboxylase carboxyl transferase subunit beta (320 aa).

The 270-residue stretch at 25 to 294 (VWTKCDSCGQ…AKDEDELLGE (270 aa)) folds into the CoA carboxyltransferase N-terminal domain. Cysteine 29, cysteine 32, cysteine 48, and cysteine 51 together coordinate Zn(2+). The segment at 29-51 (CDSCGQVLYRAELERNLEVCPKC) adopts a C4-type zinc-finger fold. Residues 295–310 (EMIADDIESSDNEPEI) show a composition bias toward acidic residues. The disordered stretch occupies residues 295 to 320 (EMIADDIESSDNEPEINIETNKKEDV).

Belongs to the AccD/PCCB family. In terms of assembly, acetyl-CoA carboxylase is a heterohexamer composed of biotin carboxyl carrier protein (AccB), biotin carboxylase (AccC) and two subunits each of ACCase subunit alpha (AccA) and ACCase subunit beta (AccD). Zn(2+) is required as a cofactor.

Its subcellular location is the cytoplasm. The catalysed reaction is N(6)-carboxybiotinyl-L-lysyl-[protein] + acetyl-CoA = N(6)-biotinyl-L-lysyl-[protein] + malonyl-CoA. The protein operates within lipid metabolism; malonyl-CoA biosynthesis; malonyl-CoA from acetyl-CoA: step 1/1. Functionally, component of the acetyl coenzyme A carboxylase (ACC) complex. Biotin carboxylase (BC) catalyzes the carboxylation of biotin on its carrier protein (BCCP) and then the CO(2) group is transferred by the transcarboxylase to acetyl-CoA to form malonyl-CoA. The chain is Acetyl-coenzyme A carboxylase carboxyl transferase subunit beta from Proteus mirabilis (strain HI4320).